Consider the following 97-residue polypeptide: Large ribosomal subunit protein uL23 (97 aa).

This sequence belongs to the universal ribosomal protein uL23 family. In terms of assembly, part of the 50S ribosomal subunit. Contacts protein L29, and trigger factor when it is bound to the ribosome.

Functionally, one of the early assembly proteins it binds 23S rRNA. One of the proteins that surrounds the polypeptide exit tunnel on the outside of the ribosome. Forms the main docking site for trigger factor binding to the ribosome. The chain is Large ribosomal subunit protein uL23 from Pelagibacter ubique (strain HTCC1062).